A 334-amino-acid polypeptide reads, in one-letter code: HTH-type transcriptional repressor PurR (334 aa).

An HTH lacI-type domain is found at 2–56; sequence ATIKDVAKMAGVSTTTVSHVINKTRHVADETKQTVLDAIKALNYSPSAVARSLKV. The H-T-H motif DNA-binding region spans 4 to 23; sequence IKDVAKMAGVSTTTVSHVIN. Residues 48 to 56 mediate DNA binding; the sequence is SAVARSLKV. Hypoxanthine is bound by residues tyrosine 73, lysine 189, threonine 191, phenylalanine 220, and aspartate 274.

As to quaternary structure, homodimer.

Its pathway is purine metabolism; purine nucleotide biosynthesis [regulation]. Its function is as follows. Is the main repressor of the genes involved in the de novo synthesis of purine nucleotides, regulating purB, purC, purEK, purF, purHD, purL, purMN and guaBA expression. PurR is allosterically activated to bind its cognate DNA by binding the purine corepressors, hypoxanthine or guanine, thereby effecting transcription repression. The chain is HTH-type transcriptional repressor PurR from Mannheimia succiniciproducens (strain KCTC 0769BP / MBEL55E).